Reading from the N-terminus, the 390-residue chain is 4-hydroxycoumarin synthase 1 (390 aa).

Residue Cys-161 is part of the active site.

This sequence belongs to the thiolase-like superfamily. Chalcone/stilbene synthases family. In terms of assembly, homodimer.

The catalysed reaction is 2-hydroxybenzoyl-CoA + malonyl-CoA = 4-hydroxycoumarin + CO2 + 2 CoA. In terms of biological role, type III polyketide synthase involved preferentially in the biosynthesis of 4-hydroxycoumarin from salicoyl-CoA. Can also use benzoyl-CoA and malonyl-CoA to produce 3,5-dihydroxybiphenyl as a major product and benzoyldiacetic acid lactone as a minor side product. Can also use m-hydroxybenzoyl-CoA as substrate, producing m-hydroxybenzoyl diacetic acid lactone as a derailment product. No activity with p-hydroxybenzoyl-CoA, CoA-linked cinnamic acids or acetyl-CoA. This Sorbus aucuparia (European mountain ash) protein is 4-hydroxycoumarin synthase 1 (BIS2).